Here is a 335-residue protein sequence, read N- to C-terminus: 3-dehydroquinate synthase (335 aa).

NAD(+)-binding positions include 56–61 (DGEKYK), 90–94 (GVITD), 114–115 (TT), Lys127, Lys135, and 153–156 (FLKT). Residues Glu168, His227, and His243 each coordinate Zn(2+).

The protein belongs to the sugar phosphate cyclases superfamily. Dehydroquinate synthase family. Requires NAD(+) as cofactor. The cofactor is Co(2+). It depends on Zn(2+) as a cofactor.

Its subcellular location is the cytoplasm. The enzyme catalyses 7-phospho-2-dehydro-3-deoxy-D-arabino-heptonate = 3-dehydroquinate + phosphate. It functions in the pathway metabolic intermediate biosynthesis; chorismate biosynthesis; chorismate from D-erythrose 4-phosphate and phosphoenolpyruvate: step 2/7. Its function is as follows. Catalyzes the conversion of 3-deoxy-D-arabino-heptulosonate 7-phosphate (DAHP) to dehydroquinate (DHQ). The sequence is that of 3-dehydroquinate synthase from Pyrococcus furiosus (strain ATCC 43587 / DSM 3638 / JCM 8422 / Vc1).